The following is a 223-amino-acid chain: Adenylate kinase 4, mitochondrial (223 aa).

15-20 (GSGKGT) serves as a coordination point for a ribonucleoside 5'-triphosphate. Residues 35 to 64 (SSGHFLRENIKANTEVGDMAKQYIEKGLLV) form an NMP region. The AMP site is built by Ser-36 and Arg-41. Lys-60 is modified (N6-succinyllysine). Residues 62–64 (LLV), 89–92 (GFPR), and Gln-96 contribute to the AMP site. The segment at 125–162 (RRWIHPPSGRVYNLDFNPPHVHGMDDVTGEPLVQQEDD) is LID. A ribonucleoside 5'-triphosphate contacts are provided by residues Arg-126 and 135 to 136 (VY). Residue Arg-170 coordinates AMP. N6-acetyllysine is present on Lys-175. 2 positions are modified to N6-acetyllysine; alternate: Lys-179 and Lys-186. N6-succinyllysine; alternate is present on residues Lys-179 and Lys-186. Thr-199 is an a ribonucleoside 5'-triphosphate binding site.

The protein belongs to the adenylate kinase family. AK3 subfamily. As to quaternary structure, monomer. Interacts with SLC25A5/ANT2.

It localises to the mitochondrion matrix. It catalyses the reaction a ribonucleoside 5'-phosphate + ATP = a ribonucleoside 5'-diphosphate + ADP. The enzyme catalyses AMP + ATP = 2 ADP. The catalysed reaction is GTP + AMP = GDP + ADP. It carries out the reaction CMP + ATP = CDP + ADP. It catalyses the reaction GTP + CMP = CDP + GDP. The enzyme catalyses dAMP + ATP = dADP + ADP. The catalysed reaction is dCMP + ATP = dCDP + ADP. It carries out the reaction a 2'-deoxyribonucleoside 5'-diphosphate + ATP = a 2'-deoxyribonucleoside 5'-triphosphate + ADP. It catalyses the reaction a ribonucleoside 5'-diphosphate + ATP = a ribonucleoside 5'-triphosphate + ADP. The enzyme catalyses GDP + ATP = GTP + ADP. The catalysed reaction is CDP + GTP = CTP + GDP. It carries out the reaction CDP + ATP = CTP + ADP. It catalyses the reaction UDP + ATP = UTP + ADP. The enzyme catalyses GTP + UDP = UTP + GDP. The catalysed reaction is dADP + GTP = dATP + GDP. It carries out the reaction dCDP + GTP = dCTP + GDP. It catalyses the reaction dCDP + ATP = dCTP + ADP. The enzyme catalyses dGDP + ATP = dGTP + ADP. The catalysed reaction is dTDP + GTP = dTTP + GDP. It carries out the reaction dTDP + ATP = dTTP + ADP. Broad-specificity mitochondrial nucleoside phosphate kinase involved in cellular nucleotide homeostasis by catalyzing nucleoside-phosphate interconversions. Similar to other adenylate kinases, preferentially catalyzes the phosphorylation of the nucleoside monophosphate AMP with ATP as phosphate donor to produce ADP. Phosphorylates only AMP when using GTP as phosphate donor. In vitro, can also catalyze the phosphorylation of CMP, dAMP and dCMP and use GTP as an alternate phosphate donor. Moreover, exhibits a diphosphate kinase activity, producing ATP, CTP, GTP, UTP, TTP, dATP, dCTP and dGTP from the corresponding diphosphate substrates with either ATP or GTP as phosphate donors. Plays a role in controlling cellular ATP levels by regulating phosphorylation and activation of the energy sensor protein kinase AMPK. Plays a protective role in the cellular response to oxidative stress. The protein is Adenylate kinase 4, mitochondrial of Bos taurus (Bovine).